Consider the following 1349-residue polypeptide: Adhesion G protein-coupled receptor F5 (1349 aa).

Residues 1–24 form the signal peptide; sequence MKSSRTVTLYFVLIVICSSEATWS. Residues 25 to 1016 are Extracellular-facing; sequence RPAEPIVHPL…PGSLLKILLD (992 aa). 16 N-linked (GlcNAc...) asparagine glycosylation sites follow: Asn-73, Asn-94, Asn-185, Asn-254, Asn-270, Asn-286, Asn-299, Asn-326, Asn-337, Asn-349, Asn-396, Asn-470, Asn-503, Asn-538, Asn-649, and Asn-666. An SEA domain is found at 163–271; it reads PETYITLKIK…NSFQGTPSNE (109 aa). Ig-like domains lie at 268–366, 367–464, and 469–559; these read PSNE…LDVT, PIRI…IAVT, and ANLT…KDVT. A disulfide bridge connects residues Cys-291 and Cys-348. Cys-389 and Cys-447 are joined by a disulfide. Cys-490 and Cys-543 are disulfide-bonded. Phosphoserine is present on Ser-819. N-linked (GlcNAc...) asparagine glycosylation is found at Asn-820, Asn-958, and Asn-963. The 165-residue stretch at 842 to 1006 folds into the GAIN-B domain; sequence TPPFLFHPNV…SILMSPDSPD (165 aa). 2 disulfide bridges follow: Cys-954-Cys-988 and Cys-973-Cys-990. The GPS stretch occupies residues 954-1006; sequence CVFWNFSLANNTGGWDSSGCTVEDDGRDNRDRVFCKCNHLTSFSILMSPDSPD. The segment at 994–1009 is tethered agonist; that stretch reads TSFSILMSPDSPDPGS. A helical transmembrane segment spans residues 1017-1036; sequence IISYIGLGFSIVSLAACLVV. Residues 1037 to 1055 are Cytoplasmic-facing; that stretch reads EAMVWKSVTKNRTSYMRHI. The chain crosses the membrane as a helical span at residues 1056 to 1078; sequence CIVNIALCLLIADIWFIVAGAIH. Residues 1079–1097 are Extracellular-facing; that stretch reads DGHYPLNETACVAATFFIH. Asn-1085 carries an N-linked (GlcNAc...) asparagine glycan. Residues 1098 to 1120 form a helical membrane-spanning segment; it reads FFYLSVFFWMLTLGLMLFYRLIF. The Cytoplasmic segment spans residues 1121–1131; the sequence is ILHDASKSTQK. A helical membrane pass occupies residues 1132-1154; that stretch reads AIAFSLGYGCPLIISSITVGVTQ. Over 1155–1173 the chain is Extracellular; that stretch reads PQEVYMRKNACWLNWEDTR. A helical membrane pass occupies residues 1174–1196; it reads ALLAFAIPALIIVVVNVSITVVV. At 1197–1216 the chain is on the cytoplasmic side; that stretch reads ITKILRPSVGDKPGKQEKSS. Residues 1217 to 1239 traverse the membrane as a helical segment; that stretch reads LFQISKSIGVLTPLLGLTWGFGL. Residues 1240–1248 are Extracellular-facing; sequence ATVIQGSNA. A helical transmembrane segment spans residues 1249 to 1271; that stretch reads VFHIIFTLLNAFQGLFILLFGCL. Over 1272-1349 the chain is Cytoplasmic; the sequence is WDQKVQEALL…NSSSAYSLLN (78 aa). Residue Thr-1303 is modified to Phosphothreonine. Ser-1310 bears the Phosphoserine mark. The segment covering 1329–1343 has biased composition (low complexity); it reads STPETTSSSVENSSS. The segment at 1329–1349 is disordered; it reads STPETTSSSVENSSSAYSLLN.

This sequence belongs to the G-protein coupled receptor 2 family. Adhesion G-protein coupled receptor (ADGR) subfamily. As to quaternary structure, homodimer; disulfide-linked. Heterodimer of 2 chains generated by proteolytic processing; the large extracellular N-terminal fragment and the membrane-bound C-terminal fragment predominantly remain associated and non-covalently linked. Fragment generates by the processing enzyme furin remains attached to the extracellular N-terminal fragment. Interacts (via N-terminal extracellular domain) with SFTPD. Post-translationally, highly glycosylated. In terms of processing, proteolytically cleaved at multiple sites: one in the GPS region of the GAIN-B domain (S1 site) and the other in the SEA domain (S2 site). The proteolytic cleavage at S1 site generates an extracellular subunit and a seven-transmembrane subunit. The proteolytic cleavage at S2 site generates a fragment that undergoes proteolytic cleavage by the processing enzyme furin. As to expression, highly expressed in the lung and to a much lesser extent in the kidney and heart. Dense localization in alveolar walls of the lung and in the intercalated cells of the collecting duct of the kidney.

It localises to the cell membrane. Its activity is regulated as follows. As an adhesion G protein-coupled receptor (aGPCR) exhibits a large N-terminal extracellular domain containing highly conserved GPCR autoproteolysis-inducing (GAIN) domain. During synthesis, intracellular autoproteolytic processing of nascent chain within the GAIN domain generates a mature protein, consisting of an N-terminal fragment that is non-covalently linked to the C-terminal fragment. The mature protein is routed to the plasma membrane where the N- and C-terminal fragments remain associated, forming the holoreceptor. Dissociation of the aGPCR fragments stimulates G protein signaling through the action of the tethered-peptide agonist stalk that is occluded within the GAIN domain in the holoreceptor form. This dissociation might be induced by ligand binding, such as that of sFNDC4. Functionally, receptor that plays a critical role in lung surfactant homeostasis. May play a role in controlling adipocyte function. Adhesion G protein-coupled receptor. In alveolar type II (ATII or AT2) cells, required for normal lung surfactant homeostasis. Modulation of both surfactant secretion and uptake by ATII cells is mediated by the downstream activation of GNAQ/GNA11 proteins and may be a consequence of increased cortical F-actin assembly induced by ADGRF5 activation. In the kidney, may play a role in the regulation of acid excretion into the primary urine, possibly by regulating the surface expression of V-ATPase proton pump. As a receptor for soluble FNDC4 (sFNDC4), required for proper systemic glucose tolerance, specifically sensitizing white adipose tissue to insulin. Also plays a role in sFNDC4-induced decrease of local inflammation in white adipose tissue. The protein is Adhesion G protein-coupled receptor F5 (Adgrf5) of Rattus norvegicus (Rat).